Consider the following 246-residue polypeptide: Orotidine 5'-phosphate decarboxylase (246 aa).

Substrate contacts are provided by residues Asp-22, Lys-44, 71 to 80, Thr-131, Arg-192, Gln-201, Gly-221, and Arg-222; that span reads DLKFHDIPNT. The Proton donor role is filled by Lys-73.

This sequence belongs to the OMP decarboxylase family. Type 1 subfamily. In terms of assembly, homodimer.

The enzyme catalyses orotidine 5'-phosphate + H(+) = UMP + CO2. It participates in pyrimidine metabolism; UMP biosynthesis via de novo pathway; UMP from orotate: step 2/2. Functionally, catalyzes the decarboxylation of orotidine 5'-monophosphate (OMP) to uridine 5'-monophosphate (UMP). The protein is Orotidine 5'-phosphate decarboxylase of Enterobacter sp. (strain 638).